Consider the following 308-residue polypeptide: Urease subunit beta (308 aa).

Positions 131-308 (GGIDTHIHFI…STNPTIPFTK (178 aa)) constitute a Urease domain. Ni(2+) is bound by residues histidine 136, histidine 138, lysine 219, histidine 248, and histidine 274. Lysine 219 is modified (N6-carboxylysine).

Belongs to the metallo-dependent hydrolases superfamily. Urease alpha subunit family. As to quaternary structure, heterohexamer of 3 UreA (alpha) and 3 UreB (beta) subunits. The cofactor is Ni cation. In terms of processing, carboxylation allows a single lysine to coordinate two nickel ions.

Its subcellular location is the cytoplasm. It carries out the reaction urea + 2 H2O + H(+) = hydrogencarbonate + 2 NH4(+). Its pathway is nitrogen metabolism; urea degradation; CO(2) and NH(3) from urea (urease route): step 1/1. This chain is Urease subunit beta (ureB), found in Helicobacter mustelae.